We begin with the raw amino-acid sequence, 187 residues long: Interferon beta (187 aa).

An N-terminal signal peptide occupies residues 1-21 (MTNKCLLQIALLLCFSTTALS). Tyr-24 is subject to Phosphotyrosine. Cys-52 and Cys-162 are disulfide-bonded. Residue Asn-101 is glycosylated (N-linked (GlcNAc...) asparagine).

The protein belongs to the alpha/beta interferon family. In terms of assembly, monomer.

Its subcellular location is the secreted. Its function is as follows. Type I interferon cytokine that plays a key role in the innate immune response to infection, developing tumors and other inflammatory stimuli. Signals via binding to high-affinity (IFNAR2) and low-affinity (IFNAR1) heterodimeric receptor, activating the canonical Jak-STAT signaling pathway resulting in transcriptional activation or repression of interferon-regulated genes that encode the effectors of the interferon response, such as antiviral proteins, regulators of cell proliferation and differentiation, and immunoregulatory proteins. Signals mostly via binding to a IFNAR1-IFNAR2 heterodimeric receptor, but can also function with IFNAR1 alone and independently of Jak-STAT pathways. Elicits a wide variety of responses, including antiviral and antibacterial activities, and can regulate the development of B-cells, myelopoiesis and lipopolysaccharide (LPS)-inducible production of tumor necrosis factor. Plays a role in neuronal homeostasis by regulating dopamine turnover and protecting dopaminergic neurons: acts by promoting neuronal autophagy and alpha-synuclein clearance, thereby preventing dopaminergic neuron loss. IFNB1 is more potent than interferon-alpha (IFN-alpha) in inducing the apoptotic and antiproliferative pathways required for control of tumor cell growth. The protein is Interferon beta of Homo sapiens (Human).